We begin with the raw amino-acid sequence, 313 residues long: Probable 5-dehydro-4-deoxyglucarate dehydratase (313 aa).

This sequence belongs to the DapA family.

It catalyses the reaction 5-dehydro-4-deoxy-D-glucarate + H(+) = 2,5-dioxopentanoate + CO2 + H2O. It participates in carbohydrate acid metabolism; D-glucarate degradation; 2,5-dioxopentanoate from D-glucarate: step 2/2. The chain is Probable 5-dehydro-4-deoxyglucarate dehydratase from Bradyrhizobium sp. (strain BTAi1 / ATCC BAA-1182).